Consider the following 407-residue polypeptide: Serine/threonine transporter SstT (407 aa).

The next 9 helical transmembrane spans lie at 14-34 (GSLV…ATVS), 48-68 (FVGA…AASI), 82-102 (IVIL…LMSF), 141-161 (AVIT…GLAL), 192-212 (IGIF…AIAG), 218-238 (LVLL…IVFF), 290-310 (IPLG…ILTL), 316-336 (MGIQ…GVSA), and 363-383 (VAMQ…SAET).

This sequence belongs to the dicarboxylate/amino acid:cation symporter (DAACS) (TC 2.A.23) family.

It localises to the cell inner membrane. The catalysed reaction is L-serine(in) + Na(+)(in) = L-serine(out) + Na(+)(out). The enzyme catalyses L-threonine(in) + Na(+)(in) = L-threonine(out) + Na(+)(out). In terms of biological role, involved in the import of serine and threonine into the cell, with the concomitant import of sodium (symport system). The protein is Serine/threonine transporter SstT of Shewanella pealeana (strain ATCC 700345 / ANG-SQ1).